The chain runs to 701 residues: Elongation factor G 2 (701 aa).

Residues 8–291 (ERYRNIGISA…AVIDYLPSPA (284 aa)) enclose the tr-type G domain. Residues 17-24 (AHIDAGKT), 88-92 (DTPGH), and 142-145 (NKMD) contribute to the GTP site.

Belongs to the TRAFAC class translation factor GTPase superfamily. Classic translation factor GTPase family. EF-G/EF-2 subfamily.

It localises to the cytoplasm. Functionally, catalyzes the GTP-dependent ribosomal translocation step during translation elongation. During this step, the ribosome changes from the pre-translocational (PRE) to the post-translocational (POST) state as the newly formed A-site-bound peptidyl-tRNA and P-site-bound deacylated tRNA move to the P and E sites, respectively. Catalyzes the coordinated movement of the two tRNA molecules, the mRNA and conformational changes in the ribosome. The chain is Elongation factor G 2 from Burkholderia lata (strain ATCC 17760 / DSM 23089 / LMG 22485 / NCIMB 9086 / R18194 / 383).